Reading from the N-terminus, the 394-residue chain is Carbamoyl phosphate synthase small chain (394 aa).

A CPSase region spans residues 1-188 (MIRKERAILA…PLPYAFPTLR (188 aa)). Residues serine 49, glycine 240, and glycine 242 each coordinate L-glutamine. The Glutamine amidotransferase type-1 domain maps to 192–379 (RVVLMDFGIK…IEEIDAFEGA (188 aa)). Catalysis depends on cysteine 267, which acts as the Nucleophile. Residues leucine 268, glutamine 271, asparagine 309, glycine 311, and tyrosine 312 each coordinate L-glutamine. Residues histidine 352 and glutamate 354 contribute to the active site.

It belongs to the CarA family. As to quaternary structure, composed of two chains; the small (or glutamine) chain promotes the hydrolysis of glutamine to ammonia, which is used by the large (or ammonia) chain to synthesize carbamoyl phosphate. Tetramer of heterodimers (alpha,beta)4.

It catalyses the reaction hydrogencarbonate + L-glutamine + 2 ATP + H2O = carbamoyl phosphate + L-glutamate + 2 ADP + phosphate + 2 H(+). It carries out the reaction L-glutamine + H2O = L-glutamate + NH4(+). The protein operates within amino-acid biosynthesis; L-arginine biosynthesis; carbamoyl phosphate from bicarbonate: step 1/1. Its pathway is pyrimidine metabolism; UMP biosynthesis via de novo pathway; (S)-dihydroorotate from bicarbonate: step 1/3. Functionally, small subunit of the glutamine-dependent carbamoyl phosphate synthetase (CPSase). CPSase catalyzes the formation of carbamoyl phosphate from the ammonia moiety of glutamine, carbonate, and phosphate donated by ATP, constituting the first step of 2 biosynthetic pathways, one leading to arginine and/or urea and the other to pyrimidine nucleotides. The small subunit (glutamine amidotransferase) binds and cleaves glutamine to supply the large subunit with the substrate ammonia. The chain is Carbamoyl phosphate synthase small chain from Deinococcus geothermalis (strain DSM 11300 / CIP 105573 / AG-3a).